We begin with the raw amino-acid sequence, 542 residues long: Glutamyl-tRNA(Gln) amidotransferase subunit A, mitochondrial (542 aa).

Residues lysine 55 and serine 143 each act as charge relay system in the active site. Serine 167 acts as the Acyl-ester intermediate in catalysis.

This sequence belongs to the amidase family. GatA subfamily. In terms of assembly, subunit of the heterotrimeric GatCAB amidotransferase (AdT) complex, composed of A, B and C subunits.

Its subcellular location is the mitochondrion. The catalysed reaction is L-glutamyl-tRNA(Gln) + L-glutamine + ATP + H2O = L-glutaminyl-tRNA(Gln) + L-glutamate + ADP + phosphate + H(+). In terms of biological role, allows the formation of correctly charged Gln-tRNA(Gln) through the transamidation of misacylated Glu-tRNA(Gln) in the mitochondria. The reaction takes place in the presence of glutamine and ATP through an activated gamma-phospho-Glu-tRNA(Gln). In Neurospora crassa (strain ATCC 24698 / 74-OR23-1A / CBS 708.71 / DSM 1257 / FGSC 987), this protein is Glutamyl-tRNA(Gln) amidotransferase subunit A, mitochondrial.